We begin with the raw amino-acid sequence, 20 residues long: Protein PR-L6 (20 aa).

Belongs to the BetVI family.

This chain is Protein PR-L6, found in Lupinus luteus (European yellow lupine).